The following is a 1159-amino-acid chain: Protocadherin-17 (1159 aa).

The N-terminal stretch at 1-17 (MYLSICCCFLLWAPALT) is a signal peptide. 6 Cadherin domains span residues 18 to 132 (LKNL…APSF), 133 to 243 (SSDQ…SPVF), 244 to 351 (EAPS…APSI), 353 to 472 (FVSV…PPRF), 473 to 583 (TKGL…APVI), and 589 to 695 (QNDT…VPRV). The Extracellular segment spans residues 18–707 (LKNLNYSVPE…EQHHWDMSLP (690 aa)). Asparagine 22 carries an N-linked (GlcNAc...) asparagine glycan. The short motif at 186–188 (RGD) is the Cell attachment site element. 6 N-linked (GlcNAc...) asparagine glycosylation sites follow: asparagine 266, asparagine 439, asparagine 453, asparagine 504, asparagine 566, and asparagine 590. The helical transmembrane segment at 708–728 (LIVTLSTISIILLAAMITIAV) threads the bilayer. Residues 729–1159 (KCKRENKEIR…RGNDPVAVRK (431 aa)) are Cytoplasmic-facing. 2 disordered regions span residues 858-909 (NFPA…KGSC) and 1108-1132 (SRDS…GRES). The segment covering 867–879 (GSRQQFVQSSSTF) has biased composition (polar residues). Basic and acidic residues-rich tracts occupy residues 880 to 895 (KDPE…HGDS) and 1120 to 1132 (QLDH…GRES).

It is found in the cell membrane. Potential calcium-dependent cell-adhesion protein. The sequence is that of Protocadherin-17 (PCDH17) from Homo sapiens (Human).